The chain runs to 66 residues: Large ribosomal subunit protein uL29 (66 aa).

The protein belongs to the universal ribosomal protein uL29 family.

The polypeptide is Large ribosomal subunit protein uL29 (Geobacillus thermodenitrificans (strain NG80-2)).